Here is a 324-residue protein sequence, read N- to C-terminus: 2-dehydro-3-deoxygluconokinase (324 aa).

Residues 35–39 (GAESN), 106–108 (YYR), and R170 each bind substrate. ATP is bound by residues 168–170 (NVR), 228–233 (KLGKEG), and 258–261 (GAGD). Substrate contacts are provided by D261 and D297. The Proton acceptor role is filled by D261.

This sequence belongs to the carbohydrate kinase PfkB family.

It catalyses the reaction 2-dehydro-3-deoxy-D-gluconate + ATP = 2-dehydro-3-deoxy-6-phospho-D-gluconate + ADP + H(+). The protein operates within carbohydrate acid metabolism; 2-dehydro-3-deoxy-D-gluconate degradation; D-glyceraldehyde 3-phosphate and pyruvate from 2-dehydro-3-deoxy-D-gluconate: step 1/2. Catalyzes the phosphorylation of 2-keto-3-deoxygluconate (KDG) to produce 2-keto-3-deoxy-6-phosphogluconate (KDPG). The protein is 2-dehydro-3-deoxygluconokinase (kdgK) of Bacillus subtilis (strain 168).